A 104-amino-acid polypeptide reads, in one-letter code: Thiosulfate sulfurtransferase PspE (104 aa).

The signal sequence occupies residues 1 to 19 (MFKKGLLALALVFSLPVFA). Residues 20-104 (AEHWIDVRVP…KDIAMPKVKG (85 aa)) form the Rhodanese domain. Cysteine 67 (cysteine persulfide intermediate) is an active-site residue.

In terms of assembly, monomer.

The protein localises to the periplasm. The enzyme catalyses thiosulfate + hydrogen cyanide = thiocyanate + sulfite + 2 H(+). Inhibited by thiosulfate above 100 mM, particularly at low cyanide concentrations (&lt;5 mM). Inhibited by sodium sulfate or sodium chloride at 0.25 M which gives around 50% inhibition of rhodanese activity. Addition of sodium phosphate at the same concentration results in about 65% inhibition. Sulfite strongly inhibits PspE activity (1 mM sodium sulfite resulted in more than 50% inhibition of rhodanese activity). Functionally, the phage shock protein (psp) operon (pspABCDE) may play a significant role in the competition for survival under nutrient- or energy-limited conditions. PspE catalyzes the sulfur-transfer reaction from thiosulfate to cyanide, to form sulfite and thiocyanate. Also able to use dithiol (dithiothreitol) as an alternate sulfur acceptor. Also possesses a very low mercaptopyruvate sulfurtransferase activity. The protein is Thiosulfate sulfurtransferase PspE (pspE) of Escherichia coli (strain K12).